Consider the following 72-residue polypeptide: Aurein-2.5 (72 aa).

The signal sequence occupies residues 1-22; that stretch reads MAFLKKSLFLVLFLGLVSLSIC. Positions 23 to 49 are excised as a propeptide; the sequence is EKEKRQNEEDEDENEAANHEEGSEEKR. The segment at 27 to 47 is disordered; it reads RQNEEDEDENEAANHEEGSEE. The span at 38-47 shows a compositional bias: basic and acidic residues; sequence AANHEEGSEE. The residue at position 65 (leucine 65) is a Leucine amide. The propeptide occupies 69–72; sequence NDLE.

It belongs to the frog skin active peptide (FSAP) family. Aurein subfamily. In terms of assembly, may be monomeric or may oligomerize as homodimers or homotrimers in Gram-positive and Gram-negative bacteria mimetic membranes. C-terminal amidation enhances antibacterial activity. This increase may be due to stabilization of the alpha-helical structure at the membrane interface. In terms of tissue distribution, expressed by the skin dorsal glands.

Its subcellular location is the secreted. The protein localises to the target cell membrane. Functionally, amphipathic alpha-helical antimicrobial peptide with moderate to potent activity against Gram-positive bacteria, Gram-negative bacteria and fungi. Also shows a weak activity against biofilm of both Gram-positive and Gram-negative bacteria. Probably acts by disturbing membrane functions with its amphipathic structure. Kills fungi via membranolytic action. Enhanced sterol levels in lipid composition membranes reduce interaction of this peptide with membranes, having a protective effect against the lytic ability of the peptide. Shows anticancer activity. This chain is Aurein-2.5, found in Ranoidea aurea (Green and golden bell frog).